We begin with the raw amino-acid sequence, 171 residues long: Ly6/PLAUR domain-containing protein 6 (171 aa).

A signal peptide spans 1 to 25 (MEPSPALAWLLLLSLVADCLKAAQS). The UPAR/Ly6 domain occupies 47-141 (FKCFTCEKAA…PRNDTDATFA (95 aa)). Cystine bridges form between C49/C77, C52/C61, C70/C96, C102/C121, C107/C118, and C122/C127. Residues 88 to 90 (NSI) carry the NxI motif motif. 2 N-linked (GlcNAc...) asparagine glycosylation sites follow: N134 and N147. Residue N147 is the site of GPI-anchor amidated asparagine attachment. A propeptide spans 148 to 171 (QTNGHPHCVSVIVSCLWVWLGLTL) (removed in mature form).

As to quaternary structure, interacts with nicotinic acetylcholine receptors (nAChRs) including CHRNA3, CHRNA4, CHRNA5, CHRNA6, CHRNA7, CHRNB2 and CHRNB4. Interacts (via NxI motif) with LRP6. As to expression, expressed at high levels in the cortex and cerebellum of the brain, at moderate levels in the lung, kidney, and liver, and at low levels in the heart and prostate (at protein level). Expressed in neurons (at protein level).

It localises to the secreted. Its subcellular location is the cytoplasm. It is found in the cell membrane. The protein localises to the synapse. The protein resides in the synaptosome. It localises to the membrane raft. Its subcellular location is the cell projection. It is found in the dendrite. The protein localises to the perikaryon. Its function is as follows. Acts as a modulator of nicotinic acetylcholine receptors (nAChRs) function in the brain. Inhibits nicotine-induced Ca(2+) influx through nAChRs. In vitro, specifically inhibits alpha-3:beta-4 and alpha-7 nAChR currents in an allosteric manner. Acts as a positive regulator of Wnt/beta-catenin signaling. This Rattus norvegicus (Rat) protein is Ly6/PLAUR domain-containing protein 6 (Lypd6).